Reading from the N-terminus, the 622-residue chain is Chromosomal replication initiator protein DnaA (622 aa).

Residues 1–99 (MADVPADLAA…SAGEPPAPPA (99 aa)) form a domain I, interacts with DnaA modulators region. The segment at 88–282 (DDSAGEPPAP…APGPGEPHAR (195 aa)) is disordered. Residues 100-281 (PPMHQSHQGP…PAPGPGEPHA (182 aa)) are domain II. 2 stretches are compositionally biased toward basic and acidic residues: residues 118 to 137 (QRDD…RPSD) and 176 to 210 (GYQD…EPWR). Gly residues predominate over residues 250–262 (PGGHGPGRTGGSV). A domain III, AAA+ region region spans residues 282 to 498 (RLNPKYLFDT…GALIRVTAFA (217 aa)). ATP contacts are provided by Gly-326, Gly-328, Lys-329, and Thr-330. Positions 499 to 622 (SLNRQPVDLG…TELTNRIKNG (124 aa)) are domain IV, binds dsDNA.

The protein belongs to the DnaA family. Oligomerizes as a right-handed, spiral filament on DNA at oriC.

The protein localises to the cytoplasm. Functionally, plays an essential role in the initiation and regulation of chromosomal replication. ATP-DnaA binds to the origin of replication (oriC) to initiate formation of the DNA replication initiation complex once per cell cycle. Binds the DnaA box (a 9 base pair repeat at the origin) and separates the double-stranded (ds)DNA. Forms a right-handed helical filament on oriC DNA; dsDNA binds to the exterior of the filament while single-stranded (ss)DNA is stabiized in the filament's interior. The ATP-DnaA-oriC complex binds and stabilizes one strand of the AT-rich DNA unwinding element (DUE), permitting loading of DNA polymerase. After initiation quickly degrades to an ADP-DnaA complex that is not apt for DNA replication. Binds acidic phospholipids. In Streptomyces griseus subsp. griseus (strain JCM 4626 / CBS 651.72 / NBRC 13350 / KCC S-0626 / ISP 5235), this protein is Chromosomal replication initiator protein DnaA.